Reading from the N-terminus, the 132-residue chain is Small ribosomal subunit protein uS11 (132 aa).

The protein belongs to the universal ribosomal protein uS11 family. Part of the 30S ribosomal subunit. Interacts with proteins S7 and S18. Binds to IF-3.

Functionally, located on the platform of the 30S subunit, it bridges several disparate RNA helices of the 16S rRNA. Forms part of the Shine-Dalgarno cleft in the 70S ribosome. The chain is Small ribosomal subunit protein uS11 from Cyanothece sp. (strain PCC 7425 / ATCC 29141).